The following is a 567-amino-acid chain: Lactase-like protein (567 aa).

The N-terminal stretch at 1–21 (MKPVWVATLLWMLLLVPRLGA) is a signal peptide. The Extracellular segment spans residues 23-541 (RKGSPEEASF…LLSHMQMVTE (519 aa)). N-linked (GlcNAc...) asparagine glycosylation is found at asparagine 80, asparagine 171, and asparagine 245. Residues 542–562 (IVVPTVCSLCVLITAVLLMLL) form a helical membrane-spanning segment. At 563–567 (LRRQS) the chain is on the cytoplasmic side.

It belongs to the glycosyl hydrolase 1 family. Klotho subfamily. In terms of assembly, may form dimers.

It localises to the endoplasmic reticulum membrane. Its function is as follows. Plays a role in formation of the lens suture in the eye, which is important for normal optical properties of the lens. In Homo sapiens (Human), this protein is Lactase-like protein (LCTL).